Consider the following 76-residue polypeptide: Envelope small membrane protein (76 aa).

At 1–14 (MLQLVNDNGLVVNV) the chain is on the virion surface side. A helical membrane pass occupies residues 15 to 35 (ILWLFVLFFLLIISITFVQLV). Residues 36 to 76 (NLCFTCHRLCNSAVYTPIGRLYRVYKSYMRIDPLPSTVIDV) are Intravirion-facing.

It belongs to the alphacoronaviruses E protein family. As to quaternary structure, homopentamer. Interacts with membrane protein M in the budding compartment of the host cell, which is located between endoplasmic reticulum and the Golgi complex. Interacts with Nucleoprotein. Interacts with host IRF3; this interaction inhibits type I IFN production.

It localises to the host Golgi apparatus membrane. The protein localises to the host endoplasmic reticulum. Plays a central role in virus morphogenesis and assembly. Acts as a viroporin and self-assembles in host membranes forming pentameric protein-lipid pores that allow ion transport. Also plays a role in the induction of apoptosis. Counteracts the production of type I interferon by interacting with host IRF3 component and preventing its translocation to the host nucleus. This chain is Envelope small membrane protein, found in Sus scrofa (Pig).